The following is a 213-amino-acid chain: Thiopurine S-methyltransferase (213 aa).

S-adenosyl-L-methionine-binding residues include tryptophan 10, leucine 46, glutamate 67, and arginine 124.

Belongs to the class I-like SAM-binding methyltransferase superfamily. TPMT family.

The protein localises to the cytoplasm. The catalysed reaction is S-adenosyl-L-methionine + a thiopurine = S-adenosyl-L-homocysteine + a thiopurine S-methylether.. In Xanthobacter autotrophicus (strain ATCC BAA-1158 / Py2), this protein is Thiopurine S-methyltransferase.